Here is a 740-residue protein sequence, read N- to C-terminus: Vacuolar protein sorting-associated protein 51 homolog (740 aa).

Coiled coils occupy residues 65-87 (SATD…VNLL) and 322-344 (RALD…LEVQ).

This sequence belongs to the VPS51 family. In terms of assembly, component of the Golgi-associated retrograde protein (GARP) complex.

In terms of biological role, may act as a component of the GARP complex that is involved in retrograde transport from early and late endosomes to the trans-Golgi network (TGN). The chain is Vacuolar protein sorting-associated protein 51 homolog from Drosophila melanogaster (Fruit fly).